The primary structure comprises 285 residues: MLIIRNKQDLKEAILEQKKANKTIGYVPTMGFLHEGHMTLVSHARKETDFVVMSVFVNPTQFGPNEDFDAYPRDEAHDAKLAEEGGVDILFVPTVEEIYPTELATKLHVIKRVSVLDGADREGHFDGVVTVLTKLFHLVNPDNAYFGQKDAQQVAVVSGLVEDYFFPINLRIIATVREADGLAKSSRNVYLTEKERKEAPVIHEALQLGRELIESGETNEAKIVQVMTDKINEQPSHENIAYLALYSYPEFTPVTDWTKGIIIAAAVKYSKARLIDNELINVKRR.

Position 30–37 (30–37 (MGFLHEGH)) interacts with ATP. The active-site Proton donor is His-37. Gln-61 contributes to the (R)-pantoate binding site. Gln-61 is a binding site for beta-alanine. 147–150 (GQKD) serves as a coordination point for ATP. Position 153 (Gln-153) interacts with (R)-pantoate. Residues Val-176 and 184-187 (KSSR) contribute to the ATP site.

Belongs to the pantothenate synthetase family. Homodimer.

The protein resides in the cytoplasm. It carries out the reaction (R)-pantoate + beta-alanine + ATP = (R)-pantothenate + AMP + diphosphate + H(+). The protein operates within cofactor biosynthesis; (R)-pantothenate biosynthesis; (R)-pantothenate from (R)-pantoate and beta-alanine: step 1/1. In terms of biological role, catalyzes the condensation of pantoate with beta-alanine in an ATP-dependent reaction via a pantoyl-adenylate intermediate. The polypeptide is Pantothenate synthetase (Listeria monocytogenes serotype 4b (strain F2365)).